The sequence spans 278 residues: Small ribosomal subunit protein uS3 (278 aa).

The 69-residue stretch at 38–106 folds into the KH type-2 domain; sequence IRKLLATGLE…QVQLNILEVK (69 aa). The disordered stretch occupies residues 215-278; that stretch reads AAAAPAGADR…AAGQPETTES (64 aa). Positions 238–278 are enriched in low complexity; sequence SGASGTTATSTDAGRAATEEAPATDAAATAPAAGQPETTES.

It belongs to the universal ribosomal protein uS3 family. In terms of assembly, part of the 30S ribosomal subunit. Forms a tight complex with proteins S10 and S14.

In terms of biological role, binds the lower part of the 30S subunit head. Binds mRNA in the 70S ribosome, positioning it for translation. In Mycolicibacterium gilvum (strain PYR-GCK) (Mycobacterium gilvum (strain PYR-GCK)), this protein is Small ribosomal subunit protein uS3.